The following is a 465-amino-acid chain: MNNSTNSSNNVALTSPYKTFEVVFIVLVAGSLSLVTIIGNILVMVSIKVNRHLQTVNNYFLFSLACADLIIGVFSMNLYTLYTVIGYWPLGPVVCDLWLALDYVVSNASVMNLLIISFDRYFCVTKPLTYPVKRTTKMAGMMIAAAWVLSFILWAPAILFWQFIVGVRTVEDGECYIQFFSNAAVTFGTAIAAFYLPVIIMTVLYWHISRASKSRIKKDKKEPVANQDPVSPSLVQGRIVKPNNNNMPGSDDGLEHNKIQNGKTPRDAVTENCVQGEEKESSNDSTSVSAVASNMRDDEITQDENTVSTSVGHSKDENSKQTCIKIVTKTPKGDQCTPTNTTVELVGSSGQNGDEKQNIVARKIVKMTKQPAKKKPPPSREKKVTRTILAILLAFIITWAPYNVMVLINTFCAPCIPNTVWTIGYWLCYINSTINPACYALCNATFKKTFKHLLMCHYKNIGATR.

The Extracellular portion of the chain corresponds to Met-1–Glu-21. 3 N-linked (GlcNAc...) asparagine glycosylation sites follow: Asn-2, Asn-3, and Asn-6. The chain crosses the membrane as a helical span at residues Val-22–Met-44. Topologically, residues Val-45–Asn-58 are cytoplasmic. A helical transmembrane segment spans residues Tyr-59–Tyr-79. The Extracellular segment spans residues Thr-80–Asp-96. Cysteines 95 and 175 form a disulfide. A helical membrane pass occupies residues Leu-97–Phe-118. Residues Asp-119–Tyr-121 carry the Important for signaling motif. The Cytoplasmic segment spans residues Asp-119 to Met-138. Residues Ala-139 to Trp-161 traverse the membrane as a helical segment. Over Gln-162 to Ala-183 the chain is Extracellular. The chain crosses the membrane as a helical span at residues Ala-184–Ile-208. Residues Ser-209 to Arg-386 lie on the Cytoplasmic side of the membrane. The tract at residues Lys-217–Ser-319 is disordered. Phosphoserine is present on Ser-231. Residues Gly-253–Val-269 show a composition bias toward basic and acidic residues. Polar residues-rich tracts occupy residues Asn-283–Ala-292 and Asp-303–Gly-312. Residues Thr-387–Asn-409 traverse the membrane as a helical segment. At Thr-410–Pro-417 the chain is on the extracellular side. Cys-412 and Cys-415 are joined by a disulfide. The helical transmembrane segment at Asn-418–Leu-441 threads the bilayer. An Important for signaling motif is present at residues Asn-435–Tyr-439. At Cys-442–Arg-465 the chain is on the cytoplasmic side. Phosphothreonine is present on residues Thr-445, Thr-449, and Thr-464.

This sequence belongs to the G-protein coupled receptor 1 family. Muscarinic acetylcholine receptor subfamily. CHRM2 sub-subfamily. Interacts with ARRB1 and ARRB2. Interacts with RACK1; the interaction regulates CHRM2 internalization. Phosphorylated in response to agonist treatment.

The protein resides in the cell membrane. The protein localises to the postsynaptic cell membrane. In terms of biological role, the muscarinic acetylcholine receptor mediates various cellular responses, including inhibition of adenylate cyclase, breakdown of phosphoinositides and modulation of potassium channels through the action of G proteins. Primary transducing effect is adenylate cyclase inhibition. Signaling promotes phospholipase C activity, leading to the release of inositol trisphosphate (IP3); this then triggers calcium ion release into the cytosol. The sequence is that of Muscarinic acetylcholine receptor M2 (CHRM2) from Bos taurus (Bovine).